A 492-amino-acid chain; its full sequence is Polyamine oxidase 5 (492 aa).

Positions 55, 63, 244, and 431 each coordinate FAD. Positions 490–492 match the Microbody targeting signal motif; that stretch reads SRL.

Belongs to the flavin monoamine oxidase family. Requires FAD as cofactor. In terms of tissue distribution, widely expressed.

The protein resides in the peroxisome. The catalysed reaction is spermine + O2 + H2O = 3-aminopropanal + spermidine + H2O2. It catalyses the reaction norspermine + O2 + H2O = norspermidine + 3-aminopropanal + H2O2. It carries out the reaction thermospermine + O2 + H2O = 3-aminopropanal + spermidine + H2O2. It functions in the pathway amine and polyamine degradation; spermine degradation. Functionally, flavoenzyme involved in polyamine back-conversion. Catalyzes the oxidation of the secondary amino group of polyamines, such as spermine. Substrate preference is spermine &gt; thermospermine &gt; norspermine. No activity detected when putrescine, spermidine or N(1)-acetylspermidine are used as substrates. Plays an important role in the regulation of polyamine intracellular concentration. May play a role in producing hydrogen peroxide during seed germination. This chain is Polyamine oxidase 5, found in Oryza sativa subsp. japonica (Rice).